The following is a 533-amino-acid chain: Light-independent protochlorophyllide reductase subunit B (533 aa).

Asp36 contacts [4Fe-4S] cluster. Asp292 serves as the catalytic Proton donor. Substrate is bound at residue 428 to 429; that stretch reads GL.

Belongs to the ChlB/BchB/BchZ family. Protochlorophyllide reductase is composed of three subunits; BchL, BchN and BchB. Forms a heterotetramer of two BchB and two BchN subunits. Requires [4Fe-4S] cluster as cofactor.

The enzyme catalyses chlorophyllide a + oxidized 2[4Fe-4S]-[ferredoxin] + 2 ADP + 2 phosphate = protochlorophyllide a + reduced 2[4Fe-4S]-[ferredoxin] + 2 ATP + 2 H2O. The protein operates within porphyrin-containing compound metabolism; bacteriochlorophyll biosynthesis (light-independent). In terms of biological role, component of the dark-operative protochlorophyllide reductase (DPOR) that uses Mg-ATP and reduced ferredoxin to reduce ring D of protochlorophyllide (Pchlide) to form chlorophyllide a (Chlide). This reaction is light-independent. The NB-protein (BchN-BchB) is the catalytic component of the complex. This Prosthecochloris aestuarii (strain DSM 271 / SK 413) protein is Light-independent protochlorophyllide reductase subunit B.